A 207-amino-acid chain; its full sequence is High frequency lysogenization protein HflD homolog (207 aa).

The protein belongs to the HflD family.

The protein localises to the cytoplasm. It localises to the cell inner membrane. This is High frequency lysogenization protein HflD homolog from Methylococcus capsulatus (strain ATCC 33009 / NCIMB 11132 / Bath).